A 603-amino-acid polypeptide reads, in one-letter code: Ankyrin repeat and LEM domain-containing protein 2 homolog (603 aa).

Residues 2–22 form a helical; Signal-anchor for type III membrane protein membrane-spanning segment; the sequence is GRKSAILAVILAIIYFRSNFS. 2 ANK repeats span residues 161 to 190 and 221 to 250; these read FRYN…NIDF and NSDT…TDRT. Disordered stretches follow at residues 446 to 465 and 505 to 538; these read ISEN…DDDD and LPPP…PPPT. A compositionally biased stretch (acidic residues) spans 456–465; it reads DSADDEDDDD.

It belongs to the ANKLE2 family. In terms of assembly, interacts with baf-1. Interacts with protein phosphatase 2A (PP2A) components.

It is found in the nucleus membrane. Its function is as follows. Involved in mitotic nuclear envelope reassembly by promoting dephosphorylation of baf-1 during mitotic exit. Coordinates the control of baf-1 dephosphorylation by inhibiting VRK1 kinase and promoting dephosphorylation of baf-1 by protein phosphatase 2A (PP2A), thereby facilitating nuclear envelope assembly. It is unclear whether it acts as a real PP2A regulatory subunit or whether it is involved in recruitment of the PP2A complex. This is Ankyrin repeat and LEM domain-containing protein 2 homolog (lem-4) from Caenorhabditis elegans.